An 83-amino-acid chain; its full sequence is MKLLLLLIITASMLIEGLVNADVYIRRHDGCKISCTVNDKYCDNECKSEGGSYGYCYAFGCWCEGLPNDKAWKSETNTCGGKK.

The first 21 residues, 1-21 (MKLLLLLIITASMLIEGLVNA), serve as a signal peptide directing secretion. Residues 22–80 (DVYIRRHDGCKISCTVNDKYCDNECKSEGGSYGYCYAFGCWCEGLPNDKAWKSETNTCG) enclose the LCN-type CS-alpha/beta domain. Intrachain disulfides connect C31/C79, C35/C56, C42/C61, and C46/C63. A Glycine amide modification is found at G80.

The protein belongs to the long (4 C-C) scorpion toxin superfamily. Sodium channel inhibitor family. Beta subfamily. Expressed by the venom gland.

Its subcellular location is the secreted. In terms of biological role, depressant insect toxins cause a transient contraction paralysis followed by a slow flaccid paralysis. They bind voltage-independently to sodium channels (Nav) and block action potentials, primarily by depolarizing the axonal membrane and suppressing the sodium current. The sequence is that of Insect toxin 2-13 from Leiurus hebraeus (Hebrew deathstalker scorpion).